The chain runs to 1279 residues: Myosin-1 (1279 aa).

Over residues 1 to 12 the composition is skewed to basic residues; that stretch reads MAIVKRGGRTRA. The disordered stretch occupies residues 1–25; that stretch reads MAIVKRGGRTRAKQQQAPAKVNNGL. Residues 48-736 form the Myosin motor domain; sequence VGVSDLTLLS…TLFALEDMRD (689 aa). 141-148 is an ATP binding site; sequence GESGAGKT. A Phosphoserine modification is found at Ser-371. Positions 419 to 502 are actin-binding; sequence SIGILDIYGF…PGLFAALNDS (84 aa). IQ domains lie at 740–760 and 761–786; these read HNMA…KEDA and AKTI…YGNS. The 191-residue stretch at 794 to 984 folds into the TH1 domain; it reads RRRFSMLGSR…SGTVTVNQGL (191 aa). Polar residues-rich tracts occupy residues 980–989 and 1018–1027; these read VNQGLPPTSK and AFQSQPTASY. 4 disordered regions span residues 980–1001, 1014–1132, 1189–1216, and 1253–1279; these read VNQG…LGKV, LAQP…PKHP, SPSA…SSNT, and LADA…DDDW. 2 stretches are compositionally biased toward low complexity: residues 1038 to 1056 and 1067 to 1095; these read TQLY…PTRT and STQT…KKIA. Over residues 1116-1126 the composition is skewed to pro residues; it reads APPPPPPPPAL. One can recognise an SH3 domain in the interval 1129–1189; it reads PKHPTYRAMY…PIDYLQEESS (61 aa). Polar residues predominate over residues 1189 to 1209; sequence SPSASAATQSYAPTTASSNPV. Over residues 1268–1279 the composition is skewed to acidic residues; sequence SDAEDDDDDDDW.

The protein belongs to the TRAFAC class myosin-kinesin ATPase superfamily. Myosin family. Phosphorylation of the TEDS site (Ser-371) is required for the polarization of the actin cytoskeleton. Phosphorylation probably activates the myosin-I ATPase activity.

It localises to the cytoplasm. The protein resides in the cytoskeleton. It is found in the actin patch. In terms of biological role, type-I myosin implicated in the organization of the actin cytoskeleton. Required for proper actin cytoskeleton polarization. At the cell cortex, assembles in patch-like structures together with proteins from the actin-polymerizing machinery and promotes actin assembly. Functions as actin nucleation-promoting factor (NPF) for the Arp2/3 complex. This is Myosin-1 (MYO1) from Lodderomyces elongisporus (strain ATCC 11503 / CBS 2605 / JCM 1781 / NBRC 1676 / NRRL YB-4239) (Yeast).